The following is a 144-amino-acid chain: Bacilliredoxin BLi02323/BL05224 (144 aa).

It belongs to the bacilliredoxin family.

The polypeptide is Bacilliredoxin BLi02323/BL05224 (Bacillus licheniformis (strain ATCC 14580 / DSM 13 / JCM 2505 / CCUG 7422 / NBRC 12200 / NCIMB 9375 / NCTC 10341 / NRRL NRS-1264 / Gibson 46)).